Consider the following 247-residue polypeptide: Potassium channel Ftrac_2467 (247 aa).

Helical transmembrane passes span 23 to 44 (TRIETFSDAVFALAITLLVLSS), 56 to 78 (SMRDVIPFAICVALIIVIWYQHY), 89 to 117 (KVTILLNTILLFVLLVYVYPLKFLARFLS), 142 to 165 (LKLLMVNYGLGAFAIFLVFSLMYW), 187 to 210 (SIIANLLMCSVPLLSLIITLIDPW), and 215 to 237 (TTILSGFLYFLYVPIMIVFGRIT). Residues 24–30 (RIETFSD) carry the RxxxFSD motif motif.

Belongs to the TMEM175 family. Homotetramer.

Its subcellular location is the cell membrane. It catalyses the reaction K(+)(in) = K(+)(out). In terms of biological role, potassium channel; forms a potassium-permeable leak-like channel with weak selectivity for potassium. The channel is permeable for K(+), Rb(+) and Cs(+). The polypeptide is Potassium channel Ftrac_2467 (Marivirga tractuosa (strain ATCC 23168 / DSM 4126 / NBRC 15989 / NCIMB 1408 / VKM B-1430 / H-43) (Microscilla tractuosa)).